A 473-amino-acid polypeptide reads, in one-letter code: Aspartyl/glutamyl-tRNA(Asn/Gln) amidotransferase subunit B (473 aa).

The protein belongs to the GatB/GatE family. GatB subfamily. As to quaternary structure, heterotrimer of A, B and C subunits.

The catalysed reaction is L-glutamyl-tRNA(Gln) + L-glutamine + ATP + H2O = L-glutaminyl-tRNA(Gln) + L-glutamate + ADP + phosphate + H(+). It catalyses the reaction L-aspartyl-tRNA(Asn) + L-glutamine + ATP + H2O = L-asparaginyl-tRNA(Asn) + L-glutamate + ADP + phosphate + 2 H(+). Its function is as follows. Allows the formation of correctly charged Asn-tRNA(Asn) or Gln-tRNA(Gln) through the transamidation of misacylated Asp-tRNA(Asn) or Glu-tRNA(Gln) in organisms which lack either or both of asparaginyl-tRNA or glutaminyl-tRNA synthetases. The reaction takes place in the presence of glutamine and ATP through an activated phospho-Asp-tRNA(Asn) or phospho-Glu-tRNA(Gln). In Francisella tularensis subsp. mediasiatica (strain FSC147), this protein is Aspartyl/glutamyl-tRNA(Asn/Gln) amidotransferase subunit B.